The chain runs to 177 residues: Large ribosomal subunit protein uL6 (177 aa).

This sequence belongs to the universal ribosomal protein uL6 family. As to quaternary structure, part of the 50S ribosomal subunit.

This protein binds to the 23S rRNA, and is important in its secondary structure. It is located near the subunit interface in the base of the L7/L12 stalk, and near the tRNA binding site of the peptidyltransferase center. The sequence is that of Large ribosomal subunit protein uL6 from Pasteurella multocida (strain Pm70).